We begin with the raw amino-acid sequence, 210 residues long: uncharacterized protein (210 aa).

The next 4 helical transmembrane spans lie at 5–25 (LAYI…TMLV), 50–70 (FWTV…VILF), 75–95 (YLGA…KSMF), and 155–175 (IILA…LVYI).

It belongs to the Rht family.

The protein resides in the cell membrane. This is an uncharacterized protein from Bacillus subtilis (strain 168).